Reading from the N-terminus, the 681-residue chain is Transmembrane protein 214-A (681 aa).

2 disordered regions span residues Met-1–Pro-41 and Lys-58–Gln-99. N-linked (GlcNAc...) asparagine glycosylation is found at Asn-300 and Asn-324. Transmembrane regions (helical) follow at residues Gly-471 to Tyr-491 and Leu-608 to Val-628.

Belongs to the TMEM214 family. As to quaternary structure, constitutively interacts with CASP4; required for the localization of procaspase 4 to the ER.

The protein localises to the endoplasmic reticulum membrane. Its function is as follows. Critical mediator, in cooperation with CASP4, of endoplasmic reticulum-stress induced apoptosis. Required or the activation of CASP4 following endoplasmic reticulum stress. This is Transmembrane protein 214-A (tmem214-a) from Xenopus laevis (African clawed frog).